We begin with the raw amino-acid sequence, 202 residues long: Small ribosomal subunit protein uS4c (202 aa).

The S4 RNA-binding domain maps to 90 to 153 (MRLDNVIFRL…KSEAIISKNI (64 aa)).

This sequence belongs to the universal ribosomal protein uS4 family. Part of the 30S ribosomal subunit. Contacts protein S5. The interaction surface between S4 and S5 is involved in control of translational fidelity.

The protein resides in the plastid. It is found in the chloroplast. In terms of biological role, one of the primary rRNA binding proteins, it binds directly to 16S rRNA where it nucleates assembly of the body of the 30S subunit. With S5 and S12 plays an important role in translational accuracy. The sequence is that of Small ribosomal subunit protein uS4c (rps4) from Hypopterygium laricinum (Moss).